Reading from the N-terminus, the 276-residue chain is ATP synthase subunit delta (276 aa).

It belongs to the ATPase delta chain family. F-type ATPases have 2 components, F(1) - the catalytic core - and F(0) - the membrane proton channel. F(1) has five subunits: alpha(3), beta(3), gamma(1), delta(1), epsilon(1). F(0) has three main subunits: a(1), b(2) and c(10-14). The alpha and beta chains form an alternating ring which encloses part of the gamma chain. F(1) is attached to F(0) by a central stalk formed by the gamma and epsilon chains, while a peripheral stalk is formed by the delta and b chains.

The protein localises to the cell membrane. F(1)F(0) ATP synthase produces ATP from ADP in the presence of a proton or sodium gradient. F-type ATPases consist of two structural domains, F(1) containing the extramembraneous catalytic core and F(0) containing the membrane proton channel, linked together by a central stalk and a peripheral stalk. During catalysis, ATP synthesis in the catalytic domain of F(1) is coupled via a rotary mechanism of the central stalk subunits to proton translocation. Its function is as follows. This protein is part of the stalk that links CF(0) to CF(1). It either transmits conformational changes from CF(0) to CF(1) or is implicated in proton conduction. The chain is ATP synthase subunit delta from Kineococcus radiotolerans (strain ATCC BAA-149 / DSM 14245 / SRS30216).